Consider the following 437-residue polypeptide: Transcription factor TGAL5 (437 aa).

The tract at residues 33–75 (QEPYSNSQSVGSTTDSSSAQNTMSQAELVSPASMRSDSGQEQQ) is disordered. Low complexity predominate over residues 37-50 (SNSQSVGSTTDSSS). Residues 51–75 (AQNTMSQAELVSPASMRSDSGQEQQ) show a composition bias toward polar residues. One can recognise a bZIP domain in the interval 126-170 (DAKTERRLAQNREAARKSRLRKKAYVQQLETSRIRLQQIEQELQR). The interval 128–148 (KTERRLAQNREAARKSRLRKK) is basic motif. The segment at 154 to 168 (LETSRIRLQQIEQEL) is leucine-zipper. The DOG1 domain occupies 191–405 (AVMFDMDYTR…RALSSLWASR (215 aa)).

It belongs to the bZIP family. In terms of assembly, interacts with NPR5/NH4, NH5.1 and NH5.2.

The protein localises to the nucleus. In terms of biological role, transcriptional regulator involved in defense response. The sequence is that of Transcription factor TGAL5 from Oryza sativa subsp. japonica (Rice).